The primary structure comprises 588 residues: Serine/threonine-protein kinase CBK1 (588 aa).

Disordered stretches follow at residues 1 to 76 and 100 to 139; these read MTDK…HQQQ and QHQQ…RDRA. Residues 29 to 42 are compositionally biased toward polar residues; that stretch reads LYQQNSNQSNTSLD. 2 stretches are compositionally biased toward low complexity: residues 43–76 and 100–117; these read QQQQ…HQQQ and QHQQ…AQQQ. The region spanning 207-517 is the Protein kinase domain; that stretch reads FVTVKVIGKG…ANEIKSHPFF (311 aa). Residues 213-221 and K236 contribute to the ATP site; that span reads IGKGAFGEV. D330 (proton acceptor) is an active-site residue. A disordered region spans residues 370 to 389; that stretch reads GTSSNPATQMGPPQNTNRQS. The 69-residue stretch at 518-586 folds into the AGC-kinase C-terminal domain; that stretch reads RGVDWSSIRE…SRFDNMTRRN (69 aa).

This sequence belongs to the protein kinase superfamily. STE Ser/Thr protein kinase family. COT1 subfamily.

The enzyme catalyses L-seryl-[protein] + ATP = O-phospho-L-seryl-[protein] + ADP + H(+). It carries out the reaction L-threonyl-[protein] + ATP = O-phospho-L-threonyl-[protein] + ADP + H(+). Functionally, protein kinase that seems to play a role in the regulation of cell morphogenesis and proliferation. In Yarrowia lipolytica (strain CLIB 122 / E 150) (Yeast), this protein is Serine/threonine-protein kinase CBK1 (CBK1).